The primary structure comprises 169 residues: Hydroperoxy fatty acid reductase gpx1 (169 aa).

Residue C41 is part of the active site.

This sequence belongs to the glutathione peroxidase family. As to quaternary structure, monomer.

The catalysed reaction is a hydroperoxy polyunsaturated fatty acid + NADPH + H(+) = a hydroxy polyunsaturated fatty acid + NADP(+) + H2O. With respect to regulation, mercaptosuccinate, pCMB, and nethylmaleimide act as inhibitors of the catalytic activity. Functionally, hydroperoxy fatty acid reductase essential for the removal of lipid hydroperoxides under normal and stress conditions, leading to the protection of membrane integrity. The polypeptide is Hydroperoxy fatty acid reductase gpx1 (gpx1) (Synechocystis sp. (strain ATCC 27184 / PCC 6803 / Kazusa)).